A 118-amino-acid chain; its full sequence is UPF0134 protein MPN_287 (118 aa).

Belongs to the UPF0134 family.

The sequence is that of UPF0134 protein MPN_287 from Mycoplasma pneumoniae (strain ATCC 29342 / M129 / Subtype 1) (Mycoplasmoides pneumoniae).